The following is a 292-amino-acid chain: [LysW]-aminoadipate kinase (292 aa).

Arginine 89 and asparagine 193 together coordinate substrate.

The protein belongs to the acetylglutamate kinase family. LysZ subfamily.

Its subcellular location is the cytoplasm. The catalysed reaction is [amino-group carrier protein]-C-terminal-N-(1,4-dicarboxybutan-1-yl)-L-glutamine + ATP = [amino-group carrier protein]-C-terminal-N-(1-carboxy-5-phosphooxy-5-oxopentan-1-yl)-L-glutamine + ADP. It participates in amino-acid biosynthesis; L-lysine biosynthesis via AAA pathway; L-lysine from L-alpha-aminoadipate (Thermus route): step 2/5. Catalyzes the phosphorylation of LysW-gamma-alpha-aminoadipate. This is [LysW]-aminoadipate kinase from Deinococcus radiodurans (strain ATCC 13939 / DSM 20539 / JCM 16871 / CCUG 27074 / LMG 4051 / NBRC 15346 / NCIMB 9279 / VKM B-1422 / R1).